Here is a 630-residue protein sequence, read N- to C-terminus: 1,4-alpha-glucan branching enzyme GlgB (630 aa).

Aspartate 311 acts as the Nucleophile in catalysis. The Proton donor role is filled by glutamate 362.

The protein belongs to the glycosyl hydrolase 13 family. GlgB subfamily. Monomer.

The enzyme catalyses Transfers a segment of a (1-&gt;4)-alpha-D-glucan chain to a primary hydroxy group in a similar glucan chain.. Its pathway is glycan biosynthesis; glycogen biosynthesis. Catalyzes the formation of the alpha-1,6-glucosidic linkages in glycogen by scission of a 1,4-alpha-linked oligosaccharide from growing alpha-1,4-glucan chains and the subsequent attachment of the oligosaccharide to the alpha-1,6 position. This chain is 1,4-alpha-glucan branching enzyme GlgB, found in Aquifex aeolicus (strain VF5).